The following is a 38-amino-acid chain: Large ribosomal subunit protein bL36A (38 aa).

The protein belongs to the bacterial ribosomal protein bL36 family.

This is Large ribosomal subunit protein bL36A from Prochlorococcus marinus (strain MIT 9515).